The primary structure comprises 215 residues: GTP-binding nuclear protein Ran (215 aa).

The Small GTPase Ran-type domain maps to 6–170 (DIPTFKLVLV…LWLARKLLGD (165 aa)). GTP-binding positions include 17–24 (DGGTGKTT), 35–41 (EKKYVAT), Gly-67, 121–124 (NKVD), and 149–151 (SAK). Residues 36–44 (KKYVATLGV) form a switch-I region. The tract at residues 67-83 (GQEKFGGLRDGYYIQGQ) is switch-II.

Belongs to the small GTPase superfamily. Ran family. In terms of assembly, found in a nuclear export complex with RanGTP, exportin and pre-miRNA.

The protein resides in the nucleus. In terms of biological role, GTP-binding protein involved in nucleocytoplasmic transport. Required for the import of protein into the nucleus and also for RNA export. Involved in chromatin condensation and control of cell cycle. The chain is GTP-binding nuclear protein Ran from Brugia malayi (Filarial nematode worm).